The following is a 266-amino-acid chain: Glutamate racemase (266 aa).

Substrate-binding positions include 9 to 10 and 41 to 42; these read DS and YG. Residue C72 is the Proton donor/acceptor of the active site. 73-74 contributes to the substrate binding site; that stretch reads NT. The active-site Proton donor/acceptor is C183. Position 184-185 (184-185) interacts with substrate; that stretch reads TH.

This sequence belongs to the aspartate/glutamate racemases family.

It carries out the reaction L-glutamate = D-glutamate. Its pathway is cell wall biogenesis; peptidoglycan biosynthesis. Functionally, provides the (R)-glutamate required for cell wall biosynthesis. In Listeria monocytogenes serotype 4b (strain CLIP80459), this protein is Glutamate racemase.